The sequence spans 195 residues: Heavy metal-associated isoprenylated plant protein 18 (195 aa).

Disordered regions lie at residues 36–76 (DVVQ…KPET) and 145–172 (EKEKKDDEPITKDEENEIDRGVYMNPSS). Basic and acidic residues-rich tracts occupy residues 47-76 (TVTKKNEEGDIVDKKDETPEVEEKIDKPET) and 145-157 (EKEKKDDEPITKD). The HMA domain occupies 78-149 (TRKLEIHIAF…RIVKMEKEKK (72 aa)). Cys192 bears the Cysteine methyl ester mark. Cys192 is lipidated: S-farnesyl cysteine. Positions 193–195 (SIS) are cleaved as a propeptide — removed in mature form.

The protein belongs to the HIPP family.

In terms of biological role, probable heavy-metal-binding protein. Required for female gametophyte development and function. The polypeptide is Heavy metal-associated isoprenylated plant protein 18 (Arabidopsis thaliana (Mouse-ear cress)).